Here is a 363-residue protein sequence, read N- to C-terminus: Molybdenum import ATP-binding protein ModC (363 aa).

Positions 1-230 (MISARFSGRQ…PNLPLIHRPD (230 aa)) constitute an ABC transporter domain. ATP is bound at residue 31-38 (GPSGCGKT). The 71-residue stretch at 289–359 (DTTILNALPA…LKAMALSAPA (71 aa)) folds into the Mop domain.

This sequence belongs to the ABC transporter superfamily. Molybdate importer (TC 3.A.1.8) family. In terms of assembly, the complex is composed of two ATP-binding proteins (ModC), two transmembrane proteins (ModB) and a solute-binding protein (ModA).

The protein resides in the cell inner membrane. It catalyses the reaction molybdate(out) + ATP + H2O = molybdate(in) + ADP + phosphate + H(+). Its function is as follows. Part of the ABC transporter complex ModABC involved in molybdenum import. Responsible for energy coupling to the transport system. The protein is Molybdenum import ATP-binding protein ModC of Rhodobacter capsulatus (Rhodopseudomonas capsulata).